Here is a 367-residue protein sequence, read N- to C-terminus: Chorismate synthase (367 aa).

NADP(+)-binding residues include arginine 48 and arginine 54. Residues 125-127, 238-239, glycine 278, 293-297, and arginine 319 contribute to the FMN site; these read RSS, NA, and KPTSS.

Belongs to the chorismate synthase family. In terms of assembly, homotetramer. Requires FMNH2 as cofactor.

It carries out the reaction 5-O-(1-carboxyvinyl)-3-phosphoshikimate = chorismate + phosphate. Its pathway is metabolic intermediate biosynthesis; chorismate biosynthesis; chorismate from D-erythrose 4-phosphate and phosphoenolpyruvate: step 7/7. In terms of biological role, catalyzes the anti-1,4-elimination of the C-3 phosphate and the C-6 proR hydrogen from 5-enolpyruvylshikimate-3-phosphate (EPSP) to yield chorismate, which is the branch point compound that serves as the starting substrate for the three terminal pathways of aromatic amino acid biosynthesis. This reaction introduces a second double bond into the aromatic ring system. This chain is Chorismate synthase, found in Stenotrophomonas maltophilia (strain K279a).